A 241-amino-acid chain; its full sequence is Endothelial protein C receptor (241 aa).

Residues 1 to 20 (MLTKFLSLLLLLLLLGCAFC) form the signal peptide. The Extracellular portion of the chain corresponds to 21-213 (NSDGSQSLHM…GSQTGRSYTS (193 aa)). N-linked (GlcNAc...) asparagine glycosylation is found at Asn47, Asn64, Asn139, Asn165, and Asn175. Residues 214-234 (LVLGILMGCFIIAGVAVGIFL) form a helical membrane-spanning segment. Residues 235-241 (CTGGRRC) are Cytoplasmic-facing.

The protein resides in the membrane. In terms of biological role, binds activated protein C. Enhances protein C activation by the thrombin-thrombomodulin complex; plays a role in the protein C pathway controlling blood coagulation. The chain is Endothelial protein C receptor (Procr) from Rattus norvegicus (Rat).